The chain runs to 341 residues: tRNA N6-adenosine threonylcarbamoyltransferase (341 aa).

The Fe cation site is built by His115 and His119. Substrate contacts are provided by residues 138–142, Asp171, Gly184, and Asn276; that span reads LVSGG. Asp304 contributes to the Fe cation binding site.

It belongs to the KAE1 / TsaD family. Fe(2+) serves as cofactor.

It localises to the cytoplasm. It catalyses the reaction L-threonylcarbamoyladenylate + adenosine(37) in tRNA = N(6)-L-threonylcarbamoyladenosine(37) in tRNA + AMP + H(+). In terms of biological role, required for the formation of a threonylcarbamoyl group on adenosine at position 37 (t(6)A37) in tRNAs that read codons beginning with adenine. Is involved in the transfer of the threonylcarbamoyl moiety of threonylcarbamoyl-AMP (TC-AMP) to the N6 group of A37, together with TsaE and TsaB. TsaD likely plays a direct catalytic role in this reaction. The chain is tRNA N6-adenosine threonylcarbamoyltransferase from Stenotrophomonas maltophilia (strain K279a).